Here is a 594-residue protein sequence, read N- to C-terminus: (-)-endo-fenchol synthase, chloroplastic (594 aa).

The N-terminal 50 residues, 1 to 50 (MSSLVMHVGIVNKPAITYLPTLSRSASNLHNVSSTRLQTSCSLQLDYKPV), are a transit peptide targeting the chloroplast. Mg(2+) is bound by residues Asp-348, Asp-352, Asp-492, and Glu-500. Residues 348–352 (DDIYD) carry the DDXXD motif motif.

It belongs to the terpene synthase family. Tpsa subfamily. The cofactor is Mg(2+). Requires Mn(2+) as cofactor. Expressed at high levels in leaves.

The protein localises to the plastid. The protein resides in the chloroplast. It catalyses the reaction (2E)-geranyl diphosphate = alpha-pinene + diphosphate. It carries out the reaction (2E)-geranyl diphosphate + H2O = (1S,2S,4R)-endo-fenchol + diphosphate. The catalysed reaction is (2E)-geranyl diphosphate = limonene + diphosphate. It participates in secondary metabolite biosynthesis; terpenoid biosynthesis. Its function is as follows. Monoterpene synthase involved in the biosynthesis of volatile compounds widely used in aromatherapy and folk medicine, and present in culinary herbs. Mediates the conversion of (2E)-geranyl diphosphate (GPP) into alpha fenchol, limonene and alpha-pinene and, as minor compounds, into beta-myrcene, alpha-terpinolene and alpha-phellandrene. The sequence is that of (-)-endo-fenchol synthase, chloroplastic from Lavandula pedunculata subsp. lusitanica (French lavender).